A 521-amino-acid polypeptide reads, in one-letter code: MTIHVKNNIHWVGQRDWEVRDFHGTEYKTHKGTSYNSYLIREGKNVLIDTVDHKFSREFVQNLAAEIDLASIDVIVINHAEEDHAGALTELMARIPGTPIYCTHNAIDSITGHHHHPEWNFHPVKTGDSLDIGNGKQLVFIETPMLHWPDSMMTYMTEDAVLFSNDAFGQHYCDEHLFNDEVDQTELMEQCQRYYANILTPFSPLVTAKIKEVLGFNLPVSMVATSHGIVWRDDPTQIILKYLEWADHYQEDRITLFYDSMSNNTRMMADAIAQGIHEVDPGVAVKIYNVARHDKNEILTQVFRSKGVLVGSSTMNNVMMPKVAGMLEEITGLRFRNKRASAFGSYGWTGGAVDRIQTRLMDAGFDISISLKAKWRPDGSALALCREHGRQLARQWALHPLEAPCPIITTSAAAAPVVEAGVVVEMSVPASAGVVEVGVPAFSGAMELPVSRGVAPTTCEQDDDQPMLCTVCQWIYDPALGEPDQLVAPGTPWARVPDSFLCPGCGIGKEVFEPCAVEACV.

The interval 30 to 210 is zinc metallo-hydrolase; sequence HKGTSYNSYL…PFSPLVTAKI (181 aa). Fe cation contacts are provided by His-79, Glu-81, Asp-83, His-147, Asp-166, and His-227. Residues 254–393 enclose the Flavodoxin-like domain; sequence ITLFYDSMSN…LCREHGRQLA (140 aa). FMN-binding positions include 260–264 and 342–369; these read SMSNN and AFGS…DISI. The Rubredoxin-like domain occupies 464–515; the sequence is DQPMLCTVCQWIYDPALGEPDQLVAPGTPWARVPDSFLCPGCGIGKEVFEPC. Fe cation contacts are provided by Cys-469, Cys-472, Cys-502, and Cys-505.

This sequence in the N-terminal section; belongs to the zinc metallo-hydrolase group 3 family. As to quaternary structure, homotetramer. The cofactor is Fe cation. FMN is required as a cofactor.

It localises to the cytoplasm. It functions in the pathway nitrogen metabolism; nitric oxide reduction. In terms of biological role, anaerobic nitric oxide reductase; uses NADH to detoxify nitric oxide (NO), protecting several 4Fe-4S NO-sensitive enzymes. Has at least 2 reductase partners, only one of which (NorW, flavorubredoxin reductase) has been identified. NO probably binds to the di-iron center; electrons enter from the NorW at rubredoxin and are transferred sequentially to the FMN center and the di-iron center. Also able to function as an aerobic oxygen reductase. This Aeromonas salmonicida (strain A449) protein is Anaerobic nitric oxide reductase flavorubredoxin.